Reading from the N-terminus, the 103-residue chain is Putative septation protein SpoVG (103 aa).

The protein belongs to the SpoVG family.

Its function is as follows. Could be involved in septation. This is Putative septation protein SpoVG from Exiguobacterium sibiricum (strain DSM 17290 / CCUG 55495 / CIP 109462 / JCM 13490 / 255-15).